We begin with the raw amino-acid sequence, 376 residues long: MDSSSGGAGGGGGAQIKGMGTHGGRYVLYNVYGNFFEVSSKYAPPIRPIGRGAYGIVCAAVNSENGEEVAIKKIGNAFDNHIDAKRTLREIKLLRHMDHENIIAIKDIIRPPRRDNFNDVYIVSELMDTDLHQIIRSNQPLTDDHCQYFLYQLLRGLKYVHSANVLHRDLKPSNLFLNANCDLKIADFGLARTTTETDLMTEYVVTRWYRAPELLLNCSQYTAAIDVWSVGCILGEIVTRQPLFPGRDYIQQLKLITELIGSPDDSSLGFLRSDNARRYMKQLPQYPRQDFRLRFRNMSAGAVDLLEKMLVFDPSRRITVDEALHHPYLASLHDINEEPTCPAPFSFDFEQPSFTEEHIKELIWRESLAFNPDPPY.

The Protein kinase domain occupies 43–329 (APPIRPIGRG…VDEALHHPYL (287 aa)). ATP-binding positions include 49–57 (IGRGAYGIV) and Lys-72. The active-site Proton acceptor is Asp-169. The residue at position 201 (Thr-201) is a Phosphothreonine. A TXY motif is present at residues 201–203 (TEY). Tyr-203 is modified (phosphotyrosine).

The protein belongs to the protein kinase superfamily. CMGC Ser/Thr protein kinase family. MAP kinase subfamily. Post-translationally, dually phosphorylated on Thr-201 and Tyr-203, which activates the enzyme.

The catalysed reaction is L-seryl-[protein] + ATP = O-phospho-L-seryl-[protein] + ADP + H(+). It carries out the reaction L-threonyl-[protein] + ATP = O-phospho-L-threonyl-[protein] + ADP + H(+). Its activity is regulated as follows. Activated by threonine and tyrosine phosphorylation. The chain is Mitogen-activated protein kinase 6 (MPK6) from Oryza sativa subsp. japonica (Rice).